A 182-amino-acid polypeptide reads, in one-letter code: MATTRLKSLYQETIVPKLINQFQYTNVHQVPKLVKVTINRGLGEAAQNAKSLEASINEIALVTGQKPVVTRAKKAIAGFKIRQGMPVGIMVTLRAERMYAFFDRLVSLSLPRIRDFRGVSPKSFDGRGNYTLGVREQLIFPEVEYDSVDQVRGMDISIITTAKNDEEGRALLKELGMPFRDQ.

It belongs to the universal ribosomal protein uL5 family. Part of the 50S ribosomal subunit; part of the 5S rRNA/L5/L18/L25 subcomplex. Contacts the 5S rRNA and the P site tRNA. Forms a bridge to the 30S subunit in the 70S ribosome.

Its function is as follows. This is one of the proteins that bind and probably mediate the attachment of the 5S RNA into the large ribosomal subunit, where it forms part of the central protuberance. In the 70S ribosome it contacts protein S13 of the 30S subunit (bridge B1b), connecting the 2 subunits; this bridge is implicated in subunit movement. Contacts the P site tRNA; the 5S rRNA and some of its associated proteins might help stabilize positioning of ribosome-bound tRNAs. In Nostoc punctiforme (strain ATCC 29133 / PCC 73102), this protein is Large ribosomal subunit protein uL5.